The sequence spans 315 residues: Putative methyltransferase NSUN5C (315 aa).

Residues 50 to 56, D74, R79, and D121 each bind S-adenosyl-L-methionine; that span reads VPPQAIK. Residue C175 is the Nucleophile of the active site. The interval 245–269 is disordered; the sequence is TSASQAKASAPERTPSPAPKRKKRA.

Belongs to the class I-like SAM-binding methyltransferase superfamily. RsmB/NOP family. As to expression, ubiquitous.

In terms of biological role, may have S-adenosyl-L-methionine-dependent methyl-transferase activity. The sequence is that of Putative methyltransferase NSUN5C (NSUN5P2) from Homo sapiens (Human).